Here is a 126-residue protein sequence, read N- to C-terminus: Small ribosomal subunit protein bS6 (126 aa).

The disordered stretch occupies residues 104–126 (QGAEKGKSSSKKVAAEAEASEEA).

It belongs to the bacterial ribosomal protein bS6 family.

Binds together with bS18 to 16S ribosomal RNA. This chain is Small ribosomal subunit protein bS6, found in Coxiella burnetii (strain Dugway 5J108-111).